Consider the following 84-residue polypeptide: U4-theraphotoxin-Hhn1b (84 aa).

Positions 1-22 are cleaved as a signal peptide; the sequence is MKVTLTAILTCAAVLVLHTTAA. A propeptide spanning residues 23–47 is cleaved from the precursor; the sequence is EELEESQLMEVGMPDTELAAVDEER. Intrachain disulfides connect C51-C65, C55-C76, and C70-C81.

The protein belongs to the neurotoxin 12 (Hwtx-2) family. 02 (Hwtx-2) subfamily. As to expression, expressed by the venom gland.

Its subcellular location is the secreted. Postsynaptic neurotoxin. The protein is U4-theraphotoxin-Hhn1b of Cyriopagopus hainanus (Chinese bird spider).